The sequence spans 257 residues: 3-alpha-hydroxysteroid dehydrogenase/carbonyl reductase (257 aa).

NAD(+)-binding positions include Gly8–Ile13, Asp32, Asp41–Leu42, and Gly71. Ser114 serves as a coordination point for substrate. The NAD(+) site is built by Tyr155 and Lys159. Tyr155 acts as the Proton acceptor in catalysis.

The protein belongs to the short-chain dehydrogenases/reductases (SDR) family. As to quaternary structure, homodimer.

It is found in the cytoplasm. The enzyme catalyses a 3alpha-hydroxysteroid + NADP(+) = a 3-oxosteroid + NADPH + H(+). The catalysed reaction is a 3alpha-hydroxysteroid + NAD(+) = a 3-oxosteroid + NADH + H(+). In terms of biological role, catalyzes the reversible interconversion of hydroxy and oxo groups at position 3 of the steroid nucleus. Along with the 3 alpha-hydroxysteroid dehydrogenase and 3-oxo-reductase activities towards a variety of cis or trans fused A/B ring steroids, it also reduces several xenobiotic carbonyl compounds, including a metyrapone-based class of insecticides, to the respective alcohol metabolites. No detectable activity on testosterone, progesterone or 3-oxo-desogestrel. This is 3-alpha-hydroxysteroid dehydrogenase/carbonyl reductase (hsdA) from Comamonas testosteroni (Pseudomonas testosteroni).